The chain runs to 901 residues: Protein translocase subunit SecA (901 aa).

ATP is bound by residues Gln-87, 105–109 (GEGKT), and Asp-512. Residues 852 to 901 (AQMQQLSHQDDDSAAAAALAAQTGDRKVGRNDPCPCGSGKKYKQCHGRLS) form a disordered region. 4 residues coordinate Zn(2+): Cys-885, Cys-887, Cys-896, and His-897. Residues 891–901 (KKYKQCHGRLS) are compositionally biased toward basic residues.

The protein belongs to the SecA family. In terms of assembly, monomer and homodimer. Part of the essential Sec protein translocation apparatus which comprises SecA, SecYEG and auxiliary proteins SecDF-YajC and YidC. Zn(2+) serves as cofactor.

The protein localises to the cell inner membrane. The protein resides in the cytoplasm. The enzyme catalyses ATP + H2O + cellular proteinSide 1 = ADP + phosphate + cellular proteinSide 2.. Its function is as follows. Part of the Sec protein translocase complex. Interacts with the SecYEG preprotein conducting channel. Has a central role in coupling the hydrolysis of ATP to the transfer of proteins into and across the cell membrane, serving both as a receptor for the preprotein-SecB complex and as an ATP-driven molecular motor driving the stepwise translocation of polypeptide chains across the membrane. This Citrobacter koseri (strain ATCC BAA-895 / CDC 4225-83 / SGSC4696) protein is Protein translocase subunit SecA.